The following is an 810-amino-acid chain: Soluble starch synthase 2-3, chloroplastic/amyloplastic (810 aa).

Residues 1-16 constitute a chloroplast transit peptide; sequence MSSAVVASSTTFLVAL. Disordered regions lie at residues 43–265 and 281–313; these read GRAG…PIPA and EPDAAEDGDDDDDWADSDASDSEIDQDDDSGPL. A compositionally biased stretch (basic and acidic residues) spans 63–83; the sequence is RDAGVVRRADDGENEAAVERA. Residues 84–93 are compositionally biased toward acidic residues; it reads GEDDEEEEEF. Positions 102–116 are enriched in basic residues; the sequence is RSRRGGVGKVLKRRG. Low complexity predominate over residues 129–148; it reads DAARVRGAAAPAPAPTQDAA. Over residues 281–310 the composition is skewed to acidic residues; it reads EPDAAEDGDDDDDWADSDASDSEIDQDDDS. Residue K333 coordinates ADP-alpha-D-glucose.

It belongs to the glycosyltransferase 1 family. Bacterial/plant glycogen synthase subfamily. Expressed most exclusively in endosperm.

It localises to the plastid. The protein localises to the amyloplast. It is found in the chloroplast. The catalysed reaction is [(1-&gt;4)-alpha-D-glucosyl](n) + ADP-alpha-D-glucose = [(1-&gt;4)-alpha-D-glucosyl](n+1) + ADP + H(+). Its pathway is glycan biosynthesis; starch biosynthesis. In terms of biological role, plays an important role during endosperm starch synthesis. Determines the type of amylopectin structure of starch grain. Synthesizes long B1 amylopectin chains by elongating short A and B1 chains, independently of the other soluble starch synthases. Barely active in japonica subspecies. This chain is Soluble starch synthase 2-3, chloroplastic/amyloplastic (SSII-3), found in Oryza sativa subsp. indica (Rice).